A 194-amino-acid polypeptide reads, in one-letter code: Large ribosomal subunit protein eL15 (194 aa).

The segment at 168–194 (RSRGLLNKGKGAEKVRPSIRAHQGKGK) is disordered. Residues 184-194 (PSIRAHQGKGK) are compositionally biased toward basic residues.

It belongs to the eukaryotic ribosomal protein eL15 family. In terms of assembly, part of the 50S ribosomal subunit.

This Thermococcus kodakarensis (strain ATCC BAA-918 / JCM 12380 / KOD1) (Pyrococcus kodakaraensis (strain KOD1)) protein is Large ribosomal subunit protein eL15.